The chain runs to 40 residues: Photosystem II reaction center protein J (40 aa).

The helical transmembrane segment at 8-28 (IPLWLIGTVTGIAVIGLIGVF) threads the bilayer.

Belongs to the PsbJ family. In terms of assembly, PSII is composed of 1 copy each of membrane proteins PsbA, PsbB, PsbC, PsbD, PsbE, PsbF, PsbH, PsbI, PsbJ, PsbK, PsbL, PsbM, PsbT, PsbX, PsbY, PsbZ, Psb30/Ycf12, at least 3 peripheral proteins of the oxygen-evolving complex and a large number of cofactors. It forms dimeric complexes.

The protein localises to the plastid. It is found in the chloroplast thylakoid membrane. One of the components of the core complex of photosystem II (PSII). PSII is a light-driven water:plastoquinone oxidoreductase that uses light energy to abstract electrons from H(2)O, generating O(2) and a proton gradient subsequently used for ATP formation. It consists of a core antenna complex that captures photons, and an electron transfer chain that converts photonic excitation into a charge separation. The chain is Photosystem II reaction center protein J from Oryza nivara (Indian wild rice).